The primary structure comprises 406 residues: Tyrosine--tRNA ligase (406 aa).

Tyr34 lines the L-tyrosine pocket. Positions 39–48 match the 'HIGH' region motif; it reads PTADSLHVGH. Residues Tyr167 and Gln171 each coordinate L-tyrosine. A 'KMSKS' region motif is present at residues 227–231; that stretch reads KMGKT. Lys230 serves as a coordination point for ATP. One can recognise an S4 RNA-binding domain in the interval 339-404; sequence RKIVDVLFEA…GKKEYHRLLV (66 aa).

This sequence belongs to the class-I aminoacyl-tRNA synthetase family. TyrS type 1 subfamily. In terms of assembly, homodimer.

It localises to the cytoplasm. The catalysed reaction is tRNA(Tyr) + L-tyrosine + ATP = L-tyrosyl-tRNA(Tyr) + AMP + diphosphate + H(+). Its function is as follows. Catalyzes the attachment of tyrosine to tRNA(Tyr) in a two-step reaction: tyrosine is first activated by ATP to form Tyr-AMP and then transferred to the acceptor end of tRNA(Tyr). The protein is Tyrosine--tRNA ligase of Caldanaerobacter subterraneus subsp. tengcongensis (strain DSM 15242 / JCM 11007 / NBRC 100824 / MB4) (Thermoanaerobacter tengcongensis).